Reading from the N-terminus, the 45-residue chain is Photosystem II reaction center protein K (45 aa).

Positions 1–8 are excised as a propeptide; the sequence is MEAALLLA. A helical transmembrane segment spans residues 24 to 44; that stretch reads LPIIPLFFLALAFVWQAAVGF.

It belongs to the PsbK family. PSII is composed of 1 copy each of membrane proteins PsbA, PsbB, PsbC, PsbD, PsbE, PsbF, PsbH, PsbI, PsbJ, PsbK, PsbL, PsbM, PsbT, PsbX, PsbY, PsbZ, Psb30/Ycf12, peripheral proteins PsbO, CyanoQ (PsbQ), PsbU, PsbV and a large number of cofactors. It forms dimeric complexes.

The protein localises to the cellular thylakoid membrane. In terms of biological role, one of the components of the core complex of photosystem II (PSII). PSII is a light-driven water:plastoquinone oxidoreductase that uses light energy to abstract electrons from H(2)O, generating O(2) and a proton gradient subsequently used for ATP formation. It consists of a core antenna complex that captures photons, and an electron transfer chain that converts photonic excitation into a charge separation. The polypeptide is Photosystem II reaction center protein K (Rippkaea orientalis (strain PCC 8801 / RF-1) (Cyanothece sp. (strain PCC 8801))).